The sequence spans 534 residues: MAAARVEYIAPWWVYWLHNFPHVDLSLRQKSPDFNPKDPGYQQTLLFVALIVALCAAVNLLFVSVYLICLCCCKKEDETETKKTSSCCVTWTAAVSGLLCCAAVGIGFYGNSETNDGVYQLTYSLDNANHTLAGIDSLVSNTNFKMKEDLDKHLFRLNEIFAARGDYVQSLRFMQQMAGNIIQQLTSLPNWQGTSVNLSDIARQTSTIEYYRWLSYLLLFISYVVICLVTCVGLAKKSKCLLLIMLCFGLIALMLSWTSLALETSSAMGTSDFCVAPDKFIMNMTHDQITTEVVHYYLYCSQSLRNPFQQALTVFQRSLTTMQIQVQGLLQFAVPLFPTAQKDLLGIQLLLNTSESNLHQITALLDCRGLHKDYLEALIGICYDGVEGMLYLGLFSLLAALAFTAMVCAMPQAWKHLEARDRDYNDIDDEDPFNPQARRIAAHNPNRGQLRSFCSYSSSMGSQASLQPPAPTVSNAPVAEYMNQAALFGGNPRYENVPLIGRGSPPPTYSPTMRATYLSMTEEPSSIYSNVFPA.

The Extracellular portion of the chain corresponds to 1–44; that stretch reads MAAARVEYIAPWWVYWLHNFPHVDLSLRQKSPDFNPKDPGYQQT. A helical membrane pass occupies residues 45-65; it reads LLFVALIVALCAAVNLLFVSV. At 66–87 the chain is on the cytoplasmic side; the sequence is YLICLCCCKKEDETETKKTSSC. A helical membrane pass occupies residues 88-108; that stretch reads CVTWTAAVSGLLCCAAVGIGF. The Extracellular segment spans residues 109 to 213; that stretch reads YGNSETNDGV…QTSTIEYYRW (105 aa). 2 residues coordinate Ca(2+): Glu-113 and Asp-116. A glycan (N-linked (GlcNAc...) asparagine) is linked at Asn-129. Positions 164 to 166 match the RGD motif; it reads RGD. An N-linked (GlcNAc...) asparagine glycan is attached at Asn-197. A helical membrane pass occupies residues 214–234; that stretch reads LSYLLLFISYVVICLVTCVGL. Over 235-240 the chain is Cytoplasmic; the sequence is AKKSKC. The helical transmembrane segment at 241–261 threads the bilayer; it reads LLLIMLCFGLIALMLSWTSLA. Residues 262-388 lie on the Extracellular side of the membrane; sequence LETSSAMGTS…IGICYDGVEG (127 aa). Intrachain disulfides connect Cys-274-Cys-382 and Cys-300-Cys-367. 2 N-linked (GlcNAc...) asparagine glycosylation sites follow: Asn-283 and Asn-352. A helical membrane pass occupies residues 389–409; the sequence is MLYLGLFSLLAALAFTAMVCA. At 410-534 the chain is on the cytoplasmic side; the sequence is MPQAWKHLEA…SSIYSNVFPA (125 aa).

Belongs to the tweety family. In terms of assembly, forms cis-homodimers in the presence of Ca(+2) and forms monomers and trans-dimers in the absence of Ca(2+).

The protein resides in the cell membrane. It carries out the reaction chloride(in) = chloride(out). The enzyme catalyses L-glutamate(out) = L-glutamate(in). May act as a calcium-independent, swelling-dependent volume-regulated anion channel (VRAC-swell) which plays a pivotal role in the process of regulatory volume decrease (RVD) in the brain through the efflux of anions like chloride and organic osmolytes like glutamate. Probable large-conductance Ca(2+)-activated chloride channel. This is Protein tweety homolog 2 (ttyh2) from Xenopus tropicalis (Western clawed frog).